A 308-amino-acid chain; its full sequence is Glucan 1,3-beta-glucosidase (308 aa).

Residues 1–18 form the signal peptide; the sequence is MQIKFLTTLATVLTSVAA. The active-site Proton donor is the E119. N-linked (GlcNAc...) asparagine glycosylation occurs at N197. The active-site Nucleophile is the E228.

It belongs to the glycosyl hydrolase 17 family.

The protein resides in the secreted. The protein localises to the cell wall. The catalysed reaction is Successive hydrolysis of beta-D-glucose units from the non-reducing ends of (1-&gt;3)-beta-D-glucans, releasing alpha-glucose.. In Candida albicans (Yeast), this protein is Glucan 1,3-beta-glucosidase (BGL2).